Reading from the N-terminus, the 261-residue chain is Calcium-binding protein 8 (261 aa).

Residues M1 to E41 are disordered. Residues M1–S234 are Cytoplasmic-facing. Over residues G8 to P33 the composition is skewed to basic and acidic residues. 2 EF-hand domains span residues E78–M113 and P114–S149. Ca(2+) contacts are provided by D91, D93, N95, E102, D127, D129, D131, Q133, and E138. The helical; Anchor for type IV membrane protein transmembrane segment at L235 to I255 threads the bilayer. Residues L256–E261 lie on the Extracellular side of the membrane.

In terms of assembly, interacts with PI4KB. This binding competes with FREQ/NCS1 binding in a calcium-dependent manner. As to expression, brain-specific. High expression in the cerebellum, hippocampus, and cortex.

It localises to the golgi apparatus. The protein localises to the trans-Golgi network membrane. Its subcellular location is the cytoplasm. It is found in the perinuclear region. The protein resides in the cell membrane. Functionally, negatively regulates Golgi-to-plasma membrane trafficking by interacting with PI4KB and inhibiting its activity. May play a role in the physiology of neurons and is potentially important in memory and learning. The polypeptide is Calcium-binding protein 8 (Caln1) (Mus musculus (Mouse)).